The primary structure comprises 207 residues: uncharacterized protein (207 aa).

A helical transmembrane segment spans residues 177-197 (LILAIGFIIGILLPTFFILLG).

It is found in the membrane. This is an uncharacterized protein from Haemophilus influenzae (strain ATCC 51907 / DSM 11121 / KW20 / Rd).